Reading from the N-terminus, the 790-residue chain is cAMP and cAMP-inhibited cGMP 3',5'-cyclic phosphodiesterase 10A (790 aa).

3',5'-cyclic AMP contacts are provided by residues 290–291 (RC), 334–335 (IA), Thr368, Gln387, and His519. The 318-residue stretch at 446–763 (TSEEWQGLMR…NQWEKVIRGE (318 aa)) folds into the PDEase domain. Catalysis depends on His519, which acts as the Proton donor. His519 lines the 3',5'-cyclic GMP pocket. Residues His523, His557, Asp558, and Asp668 each coordinate a divalent metal cation. 3',5'-cyclic AMP is bound at residue Gln720. Gln720 provides a ligand contact to 3',5'-cyclic GMP. Residues 768–790 (WISGPGPAPSKSTPEKLNVKVED) are disordered. Residues 780–790 (TPEKLNVKVED) show a composition bias toward basic and acidic residues.

This sequence belongs to the cyclic nucleotide phosphodiesterase family. Homodimer. Requires a divalent metal cation as cofactor. Detected in striatum (at protein level). Detected in testis and brain.

The protein resides in the cytoplasm. It is found in the cytosol. The enzyme catalyses a nucleoside 3',5'-cyclic phosphate + H2O = a nucleoside 5'-phosphate + H(+). It catalyses the reaction 3',5'-cyclic AMP + H2O = AMP + H(+). It carries out the reaction 3',5'-cyclic GMP + H2O = GMP + H(+). The protein operates within purine metabolism; 3',5'-cyclic AMP degradation; AMP from 3',5'-cyclic AMP: step 1/1. It functions in the pathway purine metabolism; 3',5'-cyclic GMP degradation; GMP from 3',5'-cyclic GMP: step 1/1. Functionally, plays a role in signal transduction by regulating the intracellular concentration of cyclic nucleotides. Can hydrolyze both cAMP and cGMP, but has higher affinity for cAMP and is more efficient with cAMP as substrate. May play a critical role in regulating cAMP and cGMP levels in the striatum, a region of the brain that contributes to the control of movement and cognition. The chain is cAMP and cAMP-inhibited cGMP 3',5'-cyclic phosphodiesterase 10A (Pde10a) from Mus musculus (Mouse).